A 295-amino-acid chain; its full sequence is Pyridoxal 5'-phosphate synthase subunit PdxS (295 aa).

Asp25 is a binding site for D-ribose 5-phosphate. The Schiff-base intermediate with D-ribose 5-phosphate role is filled by Lys82. D-ribose 5-phosphate is bound at residue Gly154. Residue Arg166 participates in D-glyceraldehyde 3-phosphate binding. D-ribose 5-phosphate contacts are provided by residues Gly215 and 236–237; that span reads GS.

This sequence belongs to the PdxS/SNZ family. In the presence of PdxT, forms a dodecamer of heterodimers.

It carries out the reaction aldehydo-D-ribose 5-phosphate + D-glyceraldehyde 3-phosphate + L-glutamine = pyridoxal 5'-phosphate + L-glutamate + phosphate + 3 H2O + H(+). The protein operates within cofactor biosynthesis; pyridoxal 5'-phosphate biosynthesis. Functionally, catalyzes the formation of pyridoxal 5'-phosphate from ribose 5-phosphate (RBP), glyceraldehyde 3-phosphate (G3P) and ammonia. The ammonia is provided by the PdxT subunit. Can also use ribulose 5-phosphate and dihydroxyacetone phosphate as substrates, resulting from enzyme-catalyzed isomerization of RBP and G3P, respectively. This chain is Pyridoxal 5'-phosphate synthase subunit PdxS, found in Natranaerobius thermophilus (strain ATCC BAA-1301 / DSM 18059 / JW/NM-WN-LF).